We begin with the raw amino-acid sequence, 346 residues long: G-protein coupled receptor 42 (346 aa).

Residues 1 to 19 lie on the Extracellular side of the membrane; the sequence is MDTGPDQSYFSGNHWFVFS. A helical transmembrane segment spans residues 20-40; it reads VYLLTFLVGLPLNLLALVVFV. Topologically, residues 41-47 are cytoplasmic; sequence GKLRCRP. A helical membrane pass occupies residues 48–68; it reads VAVDVLLLNLTASDLLLLLFL. The Extracellular portion of the chain corresponds to 69–90; the sequence is PFRMVEAANGMHWPLPFILCPL. The chain crosses the membrane as a helical span at residues 91–111; sequence SGFIFFTTIYLTALFLAAVSI. Residues 112 to 132 are Cytoplasmic-facing; that stretch reads ERFLSVAHPLWYKTRPRLGQA. Residues 133 to 153 form a helical membrane-spanning segment; it reads GLVSVACWLLASAHCSVVYVI. The Extracellular segment spans residues 154 to 178; sequence EFSGDISHSQGTNGTCYLEFRKDQL. Residue Asn-166 is glycosylated (N-linked (GlcNAc...) asparagine). The chain crosses the membrane as a helical span at residues 179–199; it reads AILLPVRLEMAVVLFVVPLII. The Cytoplasmic segment spans residues 200-222; sequence TSYCYSRLVWILGRGGSHRRQRR. Residues 223-243 traverse the membrane as a helical segment; the sequence is VAGLVAATLLNFLVCFGPYNV. Residues 244–258 lie on the Extracellular side of the membrane; it reads SHVVGYICGESPVWR. The helical transmembrane segment at 259–279 threads the bilayer; it reads IYVTLLSTLNSCVDPFVYYFS. The Cytoplasmic segment spans residues 280–346; it reads SSGFQADFHE…TGGQVACAEN (67 aa). A compositionally biased stretch (basic and acidic residues) spans 307–330; the sequence is MELKEQKGGEEQRADRPAERKTSE. A disordered region spans residues 307–346; it reads MELKEQKGGEEQRADRPAERKTSEHSQGCGTGGQVACAEN.

This sequence belongs to the G-protein coupled receptor 1 family.

The protein localises to the cell membrane. Functionally, g protein-coupled receptor that is activated by short chain fatty acids (SCFAs), such as propionate. Hence may play a role in the regulation of whole-body energy homeostasis and/or in intestinal immunity. This chain is G-protein coupled receptor 42 (GPR42), found in Homo sapiens (Human).